Consider the following 108-residue polypeptide: Thiosulfate sulfurtransferase GlpE (108 aa).

The Rhodanese domain occupies glutamate 18–threonine 106. Cysteine 66 functions as the Cysteine persulfide intermediate in the catalytic mechanism.

Belongs to the GlpE family.

The protein localises to the cytoplasm. It catalyses the reaction thiosulfate + hydrogen cyanide = thiocyanate + sulfite + 2 H(+). The enzyme catalyses thiosulfate + [thioredoxin]-dithiol = [thioredoxin]-disulfide + hydrogen sulfide + sulfite + 2 H(+). In terms of biological role, transferase that catalyzes the transfer of sulfur from thiosulfate to thiophilic acceptors such as cyanide or dithiols. May function in a CysM-independent thiosulfate assimilation pathway by catalyzing the conversion of thiosulfate to sulfite, which can then be used for L-cysteine biosynthesis. This Actinobacillus pleuropneumoniae serotype 3 (strain JL03) protein is Thiosulfate sulfurtransferase GlpE.